The chain runs to 89 residues: Small ribosomal subunit protein uS15 (89 aa).

Residues 1 to 24 (MALTQTKKQELISQYQAHETDTGS) form a disordered region.

This sequence belongs to the universal ribosomal protein uS15 family. In terms of assembly, part of the 30S ribosomal subunit. Forms a bridge to the 50S subunit in the 70S ribosome, contacting the 23S rRNA.

Its function is as follows. One of the primary rRNA binding proteins, it binds directly to 16S rRNA where it helps nucleate assembly of the platform of the 30S subunit by binding and bridging several RNA helices of the 16S rRNA. Functionally, forms an intersubunit bridge (bridge B4) with the 23S rRNA of the 50S subunit in the ribosome. This is Small ribosomal subunit protein uS15 from Microcystis aeruginosa (strain NIES-843 / IAM M-2473).